The chain runs to 225 residues: Ribonuclease T (225 aa).

Residues 1-21 form a disordered region; that stretch reads MSEDHFDEEHEGHGGGGGSRH. Positions 33–207 constitute an Exonuclease domain; that stretch reads VVVDVETGGF…YDTEKTAELF (175 aa). Mg(2+) is bound by residues Asp36, Glu38, His194, and Asp199. His194 (proton donor/acceptor) is an active-site residue.

Belongs to the RNase T family. In terms of assembly, homodimer. Mg(2+) is required as a cofactor.

Its function is as follows. Trims short 3' overhangs of a variety of RNA species, leaving a one or two nucleotide 3' overhang. Responsible for the end-turnover of tRNA: specifically removes the terminal AMP residue from uncharged tRNA (tRNA-C-C-A). Also appears to be involved in tRNA biosynthesis. The sequence is that of Ribonuclease T from Pseudomonas syringae pv. tomato (strain ATCC BAA-871 / DC3000).